The primary structure comprises 806 residues: mRNA 3'-end-processing protein RNA14 (806 aa).

The tract at residues Met1–Arg187 is disordered. 2 stretches are compositionally biased toward basic and acidic residues: residues Ala33 to Glu43 and Gln60 to Asn107. Residues Pro108–Tyr118 are compositionally biased toward acidic residues. Residues Ala132–Ile142 are compositionally biased toward gly residues. The span at Ser170–Asp181 shows a compositional bias: low complexity. HAT repeat units lie at residues Glu221 to Asp253, Gly255 to Arg286, Glu299 to Ser334, Gln345 to Ser378, and Val404 to Ser440. The segment at Lys729–Asp770 is disordered. Basic and acidic residues predominate over residues Ser732 to Ser744.

It localises to the nucleus. The protein localises to the cytoplasm. Its function is as follows. Component of the cleavage factor IA (CFIA) complex, which is involved in the endonucleolytic cleavage during polyadenylation-dependent pre-mRNA 3'-end formation. The chain is mRNA 3'-end-processing protein RNA14 (RNA14) from Yarrowia lipolytica (strain CLIB 122 / E 150) (Yeast).